A 131-amino-acid polypeptide reads, in one-letter code: Transcription antitermination protein NusB (131 aa).

The protein belongs to the NusB family.

Functionally, involved in transcription antitermination. Required for transcription of ribosomal RNA (rRNA) genes. Binds specifically to the boxA antiterminator sequence of the ribosomal RNA (rrn) operons. This is Transcription antitermination protein NusB from Agathobacter rectalis (strain ATCC 33656 / DSM 3377 / JCM 17463 / KCTC 5835 / VPI 0990) (Eubacterium rectale).